Here is a 487-residue protein sequence, read N- to C-terminus: Gasdermin-D (487 aa).

Tyr-38 bears the Phosphotyrosine mark. Residues Cys-39, Cys-57, and Cys-77 each carry the S-(2-succinyl)cysteine modification. 2 consecutive transmembrane segments (beta stranded) span residues 92–98 (QGRVMLS) and 104–109 (KISGGA). The residue at position 122 (Cys-122) is an S-(2-succinyl)cysteine. A run of 2 beta stranded transmembrane segments spans residues 181 to 187 (GSGQFTL) and 192 to 198 (CLKGEGK). 2 positions are modified to S-(2-succinyl)cysteine: Cys-192 and Cys-265. Residue Cys-192 is the site of S-palmitoyl cysteine attachment. Residues 278 to 298 (IDEEELIEAADFQGLYAEVKA) form a linker helix loop region. Residues Cys-299, Cys-434, and Cys-487 each carry the S-(2-succinyl)cysteine modification.

Belongs to the gasdermin family. As to quaternary structure, homooligomer; homooligomeric ring-shaped pore complex containing 27-28 subunits when inserted in the membrane. Homooligomerization is promoted by the mTORC1 complex in macrophages. In response to a canonical inflammasome stimulus, such as nigericin, recruited to NLRP3 inflammasone with similar kinetics to that of uncleaved CASP1 precursor. Although this recruitment is also observed in the absence of PYCARD, it is more efficient in its presence. In terms of processing, cleavage at Asp-276 by CASP1 (mature and uncleaved precursor forms), CASP4/CASP11 or CASP8 relieves autoinhibition and is sufficient to initiate pyroptosis. Cleavage by CASP1 and CASP4/CASP11 is not strictly dependent on the consensus cleavage site on GSDMD but depends on an exosite interface on CASP1 that recognizes and binds the Gasdermin-D, C-terminal (GSDMD-CT) part. Cleavage by CASP8 takes place following inactivation of MAP3K7/TAK1 by Yersinia toxin YopJ. Cleavage at Asp-88 by CASP3 or CASP7 inactivates the ability to mediate pyroptosis, but generates the Gasdermin-D, p13 chain, which translocates to the nucleus and acts as a transcription regulator. Cleavage by papain allergen generates the Gasdermin-D, p40 chain. Post-translationally, palmitoylated at Cys-192 by ZDHHC5 and ZDHHC9 in response to microbial infection and danger signals. May also be palmitoylated by ZDHHC7. Palmitoylation takes place before cleavage by caspases (CASP1, CASP4, CASP5 or CASP8) and is required for membrane translocation and pore formation. Depalmitoylated by LYPLA2. Succination of Cys-192 by the Krebs cycle intermediate fumarate, which leads to S-(2-succinyl)cysteine residues, inhibits processing by caspases, and ability to initiate pyroptosis. Succination modification is catalyzed by a non-enzymatic reaction caused by an accumulation of fumarate. In terms of processing, glycosylated: O-GlcNAcylation by OGT leads to reduced cleavage by CASP4 and decreased LPS-induced endothelial cell pyroptosis. In terms of tissue distribution, highly expressed in brain endothelial cells.

It localises to the cytoplasm. The protein resides in the cytosol. It is found in the inflammasome. Its subcellular location is the cell membrane. The protein localises to the secreted. It localises to the mitochondrion membrane. The protein resides in the nucleus. Its activity is regulated as follows. The full-length protein before cleavage is inactive: intramolecular interactions between N- and C-terminal domains mediate autoinhibition in the absence of activation signal. The intrinsic pyroptosis-inducing activity is carried by the released N-terminal moiety (Gasdermin-D, N-terminal) following cleavage by inflammatory caspases CASP1, CASP4/CASP11 or CASP8. Cleavage at Asp-88 by CASP3 or CASP7 inactivates the ability to mediate pyroptosis. Pore formation is specifically inhibited by VHH(GSDMD-1) nanobody, protecting against excessive pyroptosis. Inhibited by small molecule NU6300, which covalently reacts with Cys-191, thereby preventing palmitoylation and pyroptosis. In terms of biological role, precursor of a pore-forming protein that plays a key role in host defense against pathogen infection and danger signals. This form constitutes the precursor of the pore-forming protein: upon cleavage, the released N-terminal moiety (Gasdermin-D, N-terminal) binds to membranes and forms pores, triggering pyroptosis. Promotes pyroptosis in response to microbial infection and danger signals. Produced by the cleavage of gasdermin-D by inflammatory caspases CASP1 or CASP4/CASP11 in response to canonical, as well as non-canonical (such as cytosolic LPS) inflammasome activators. After cleavage, moves to the plasma membrane where it strongly binds to inner leaflet lipids, including monophosphorylated phosphatidylinositols, such as phosphatidylinositol 4-phosphate, bisphosphorylated phosphatidylinositols, such as phosphatidylinositol (4,5)-bisphosphate, as well as phosphatidylinositol (3,4,5)-bisphosphate, and more weakly to phosphatidic acid and phosphatidylserine. Homooligomerizes within the membrane and forms pores of 10-15 nanometers (nm) of inner diameter, allowing the release of mature interleukin-1 (IL1B and IL18) and triggering pyroptosis. Gasdermin pores also allow the release of mature caspase-7 (CASP7). In some, but not all, cells types, pyroptosis is followed by pyroptotic cell death, which is caused by downstream activation of ninjurin-1 (NINJ1), which mediates membrane rupture (cytolysis). Also forms pores in the mitochondrial membrane, resulting in release of mitochondrial DNA (mtDNA) into the cytosol. Gasdermin-D, N-terminal released from pyroptotic cells into the extracellular milieu rapidly binds to and kills both Gram-negative and Gram-positive bacteria, without harming neighboring mammalian cells, as it does not disrupt the plasma membrane from the outside due to lipid-binding specificity. Under cell culture conditions, also active against intracellular bacteria, such as Listeria monocytogenes. Also active in response to MAP3K7/TAK1 inactivation by Yersinia toxin YopJ, which triggers cleavage by CASP8 and subsequent activation. Required for mucosal tissue defense against enteric pathogens. Activation of the non-canonical inflammasome in brain endothelial cells can lead to excessive pyroptosis, leading to blood-brain barrier breakdown. Strongly binds to bacterial and mitochondrial lipids, including cardiolipin. Does not bind to unphosphorylated phosphatidylinositol, phosphatidylethanolamine nor phosphatidylcholine. Its function is as follows. Transcription coactivator produced by the cleavage by CASP3 or CASP7 in the upper small intestine in response to dietary antigens. Required to maintain food tolerance in small intestine: translocates to the nucleus and acts as a coactivator for STAT1 to induce the transcription of CIITA and MHC class II molecules, which in turn induce type 1 regulatory T (Tr1) cells in upper small intestine. Functionally, produced by the cleavage by papain allergen. After cleavage, moves to the plasma membrane and homooligomerizes within the membrane and forms pores of 10-15 nanometers (nm) of inner diameter, allowing the specific release of mature interleukin-33 (IL33), promoting type 2 inflammatory immune response. This Mus musculus (Mouse) protein is Gasdermin-D.